Reading from the N-terminus, the 202-residue chain is Imidazoleglycerol-phosphate dehydratase (202 aa).

Belongs to the imidazoleglycerol-phosphate dehydratase family. As to quaternary structure, homotrimer.

The catalysed reaction is D-erythro-1-(imidazol-4-yl)glycerol 3-phosphate = 3-(imidazol-4-yl)-2-oxopropyl phosphate + H2O. It participates in amino-acid biosynthesis; L-histidine biosynthesis; L-histidine from 5-phospho-alpha-D-ribose 1-diphosphate: step 6/9. The protein is Imidazoleglycerol-phosphate dehydratase (HIS3) of Cryptococcus neoformans var. neoformans serotype D (strain B-3501A) (Filobasidiella neoformans).